We begin with the raw amino-acid sequence, 534 residues long: BEN domain-containing protein 4 (534 aa).

Disordered regions lie at residues 1–24, 48–128, and 287–322; these read MEEE…RSPY, ELPH…AASS, and VHTL…EEGY. Residues 53–63 are compositionally biased toward pro residues; that stretch reads RAPPPPPPPFA. The span at 69 to 83 shows a compositional bias: polar residues; the sequence is SISSSEPPPQQFQAQ. Over residues 91–109 the composition is skewed to low complexity; sequence GRAAAAASSSSPSCTPATS. Positions 295 to 310 are enriched in polar residues; sequence SPATSESHGHPSSSTL. Residues 311–321 show a composition bias toward acidic residues; it reads PEEEEEEDEEG. The stretch at 324 to 351 forms a coiled coil; that stretch reads PRCQELEQEVISLQQENEELRRKLESIP. Residues 390-498 form the BEN domain; sequence NYPVYITSKQ…DAVGHARQGR (109 aa).

This chain is BEN domain-containing protein 4 (BEND4), found in Homo sapiens (Human).